The chain runs to 141 residues: Large ribosomal subunit protein uL16 (141 aa).

It belongs to the universal ribosomal protein uL16 family. Part of the 50S ribosomal subunit.

Its function is as follows. Binds 23S rRNA and is also seen to make contacts with the A and possibly P site tRNAs. In Microchaete diplosiphon (Fremyella diplosiphon), this protein is Large ribosomal subunit protein uL16.